The sequence spans 156 residues: Ribosomal RNA large subunit methyltransferase H (156 aa).

Residues Gly104 and 123–128 (LSPMVM) each bind S-adenosyl-L-methionine.

The protein belongs to the RNA methyltransferase RlmH family. In terms of assembly, homodimer.

The protein localises to the cytoplasm. It catalyses the reaction pseudouridine(1915) in 23S rRNA + S-adenosyl-L-methionine = N(3)-methylpseudouridine(1915) in 23S rRNA + S-adenosyl-L-homocysteine + H(+). In terms of biological role, specifically methylates the pseudouridine at position 1915 (m3Psi1915) in 23S rRNA. The protein is Ribosomal RNA large subunit methyltransferase H of Bdellovibrio bacteriovorus (strain ATCC 15356 / DSM 50701 / NCIMB 9529 / HD100).